The following is a 160-amino-acid chain: Major allergen Pru ar 1 (160 aa).

Belongs to the BetVI family.

This is Major allergen Pru ar 1 from Prunus armeniaca (Apricot).